The chain runs to 484 residues: Adenylosuccinate lyase (484 aa).

The residue at position 2 (alanine 2) is an N-acetylalanine. Residues 20-21 (RY), 85-87 (RHD), and 111-112 (TS) contribute to the substrate site. Residue lysine 147 is modified to N6-acetyllysine. Histidine 159 acts as the Proton donor/acceptor in catalysis. Position 241 (glutamine 241) interacts with substrate. Catalysis depends on serine 289, which acts as the Proton donor/acceptor. Residue lysine 295 is modified to N6-acetyllysine. The substrate site is built by arginine 303, arginine 329, serine 334, and arginine 338. Lysine 415 participates in a covalent cross-link: Glycyl lysine isopeptide (Lys-Gly) (interchain with G-Cter in SUMO1).

It belongs to the lyase 1 family. Adenylosuccinate lyase subfamily. In terms of assembly, homotetramer. Residues from neighboring subunits contribute catalytic and substrate-binding residues to each active site.

The enzyme catalyses N(6)-(1,2-dicarboxyethyl)-AMP = fumarate + AMP. It catalyses the reaction (2S)-2-[5-amino-1-(5-phospho-beta-D-ribosyl)imidazole-4-carboxamido]succinate = 5-amino-1-(5-phospho-beta-D-ribosyl)imidazole-4-carboxamide + fumarate. The protein operates within purine metabolism; AMP biosynthesis via de novo pathway; AMP from IMP: step 2/2. It functions in the pathway purine metabolism; IMP biosynthesis via de novo pathway; 5-amino-1-(5-phospho-D-ribosyl)imidazole-4-carboxamide from 5-amino-1-(5-phospho-D-ribosyl)imidazole-4-carboxylate: step 2/2. Functionally, catalyzes two non-sequential steps in de novo AMP synthesis: converts (S)-2-(5-amino-1-(5-phospho-D-ribosyl)imidazole-4-carboxamido)succinate (SAICAR) to fumarate plus 5-amino-1-(5-phospho-D-ribosyl)imidazole-4-carboxamide, and thereby also contributes to de novo IMP synthesis, and converts succinyladenosine monophosphate (SAMP) to AMP and fumarate. This is Adenylosuccinate lyase (Adsl) from Mus musculus (Mouse).